The chain runs to 1342 residues: DNA-directed RNA polymerase subunit beta (1342 aa).

It belongs to the RNA polymerase beta chain family. In terms of assembly, the RNAP catalytic core consists of 2 alpha, 1 beta, 1 beta' and 1 omega subunit. When a sigma factor is associated with the core the holoenzyme is formed, which can initiate transcription.

The enzyme catalyses RNA(n) + a ribonucleoside 5'-triphosphate = RNA(n+1) + diphosphate. DNA-dependent RNA polymerase catalyzes the transcription of DNA into RNA using the four ribonucleoside triphosphates as substrates. This is DNA-directed RNA polymerase subunit beta from Enterobacter sp. (strain 638).